The chain runs to 166 residues: Photosystem I assembly protein Ycf3 (166 aa).

3 TPR repeats span residues Ala-31–Pro-64, Ser-68–Leu-101, and Gly-116–Asn-149.

It belongs to the Ycf3 family.

The protein localises to the cellular thylakoid membrane. Functionally, essential for the assembly of the photosystem I (PSI) complex. May act as a chaperone-like factor to guide the assembly of the PSI subunits. This chain is Photosystem I assembly protein Ycf3, found in Acaryochloris marina (strain MBIC 11017).